A 1206-amino-acid chain; its full sequence is Methionine synthase (1206 aa).

Positions 1–314 constitute a Hcy-binding domain; that stretch reads MRVTAANQHQ…DHIREVAAAV (314 aa). Zn(2+) is bound by residues Cys-233, Cys-299, and Cys-300. The 260-residue stretch at 350-609 folds into the Pterin-binding domain; the sequence is VLMIGERTNA…IPEEQRQAAL (260 aa). In terms of domain architecture, B12-binding N-terminal spans 642 to 735; sequence REAELAKLPL…HMEKSDCDFG (94 aa). Positions 740–877 constitute a B12-binding domain; that stretch reads KGRIVLATVK…SAKRGEALAP (138 aa). Residues 750 to 754, His-753, Ser-798, and Ala-856 each bind methylcob(III)alamin; that span reads GDVHD. Residues 873-925 are disordered; the sequence is EALAPGSPESLAAEADRNKETERKARHERSKRIAVQRKAAEEPVEVPERSDVP. Over residues 886-897 the composition is skewed to basic and acidic residues; that stretch reads EADRNKETERKA. Residues 898–907 show a composition bias toward basic residues; the sequence is RHERSKRIAV. Residues 907–1206 enclose the AdoMet activation domain; it reads VQRKAAEEPV…HHPAAKYFNV (300 aa). Basic and acidic residues predominate over residues 910 to 924; that stretch reads KAAEEPVEVPERSDV. S-adenosyl-L-methionine-binding positions include Asp-954, Arg-1149, and 1203–1204; that span reads YF.

The protein belongs to the vitamin-B12 dependent methionine synthase family. It depends on methylcob(III)alamin as a cofactor. Requires Zn(2+) as cofactor.

The catalysed reaction is (6S)-5-methyl-5,6,7,8-tetrahydrofolate + L-homocysteine = (6S)-5,6,7,8-tetrahydrofolate + L-methionine. Its pathway is amino-acid biosynthesis; L-methionine biosynthesis via de novo pathway; L-methionine from L-homocysteine (MetH route): step 1/1. In terms of biological role, catalyzes the transfer of a methyl group from methyl-cobalamin to homocysteine, yielding enzyme-bound cob(I)alamin and methionine. Subsequently, remethylates the cofactor using methyltetrahydrofolate. In Mycobacterium leprae (strain TN), this protein is Methionine synthase (metH).